The following is a 497-amino-acid chain: Bifunctional protein GlmU (497 aa).

The segment at 1-252 (MSQPSARPSA…VWEVEGANDR (252 aa)) is pyrophosphorylase. UDP-N-acetyl-alpha-D-glucosamine is bound by residues 14 to 17 (LAAG), Lys-28, Gln-86, 91 to 92 (GT), 115 to 117 (YGD), Gly-154, Glu-169, Asn-192, and Asn-250. Position 117 (Asp-117) interacts with Mg(2+). Position 250 (Asn-250) interacts with Mg(2+). Residues 253 to 273 (RQLSDLGRRLNERVLRHWMKE) form a linker region. An N-acetyltransferase region spans residues 274–497 (GVTVVDPSST…AGAEGSGAQG (224 aa)). Arg-355 and Lys-373 together coordinate UDP-N-acetyl-alpha-D-glucosamine. The Proton acceptor role is filled by His-385. 2 residues coordinate UDP-N-acetyl-alpha-D-glucosamine: Tyr-388 and Asn-399. Acetyl-CoA contacts are provided by residues 408 to 409 (NY), Ser-427, and Ala-445. Residues 473-497 (PAKRPGTSSAEAARAAGAEGSGAQG) are disordered. Residues 480–490 (SSAEAARAAGA) are compositionally biased toward low complexity.

The protein in the N-terminal section; belongs to the N-acetylglucosamine-1-phosphate uridyltransferase family. This sequence in the C-terminal section; belongs to the transferase hexapeptide repeat family. As to quaternary structure, homotrimer. Mg(2+) serves as cofactor.

It localises to the cytoplasm. It catalyses the reaction alpha-D-glucosamine 1-phosphate + acetyl-CoA = N-acetyl-alpha-D-glucosamine 1-phosphate + CoA + H(+). It carries out the reaction N-acetyl-alpha-D-glucosamine 1-phosphate + UTP + H(+) = UDP-N-acetyl-alpha-D-glucosamine + diphosphate. It functions in the pathway nucleotide-sugar biosynthesis; UDP-N-acetyl-alpha-D-glucosamine biosynthesis; N-acetyl-alpha-D-glucosamine 1-phosphate from alpha-D-glucosamine 6-phosphate (route II): step 2/2. It participates in nucleotide-sugar biosynthesis; UDP-N-acetyl-alpha-D-glucosamine biosynthesis; UDP-N-acetyl-alpha-D-glucosamine from N-acetyl-alpha-D-glucosamine 1-phosphate: step 1/1. Its pathway is bacterial outer membrane biogenesis; LPS lipid A biosynthesis. Its function is as follows. Catalyzes the last two sequential reactions in the de novo biosynthetic pathway for UDP-N-acetylglucosamine (UDP-GlcNAc). The C-terminal domain catalyzes the transfer of acetyl group from acetyl coenzyme A to glucosamine-1-phosphate (GlcN-1-P) to produce N-acetylglucosamine-1-phosphate (GlcNAc-1-P), which is converted into UDP-GlcNAc by the transfer of uridine 5-monophosphate (from uridine 5-triphosphate), a reaction catalyzed by the N-terminal domain. This chain is Bifunctional protein GlmU, found in Micrococcus luteus (strain ATCC 4698 / DSM 20030 / JCM 1464 / CCM 169 / CCUG 5858 / IAM 1056 / NBRC 3333 / NCIMB 9278 / NCTC 2665 / VKM Ac-2230) (Micrococcus lysodeikticus).